A 108-amino-acid polypeptide reads, in one-letter code: Nucleoid-associated protein BAV0915 (108 aa).

Belongs to the YbaB/EbfC family. As to quaternary structure, homodimer.

It localises to the cytoplasm. Its subcellular location is the nucleoid. Functionally, binds to DNA and alters its conformation. May be involved in regulation of gene expression, nucleoid organization and DNA protection. The chain is Nucleoid-associated protein BAV0915 from Bordetella avium (strain 197N).